Consider the following 203-residue polypeptide: Thymidylate kinase (203 aa).

10-17 (GIDGAGKS) lines the ATP pocket.

The protein belongs to the thymidylate kinase family.

The catalysed reaction is dTMP + ATP = dTDP + ADP. In terms of biological role, phosphorylation of dTMP to form dTDP in both de novo and salvage pathways of dTTP synthesis. The polypeptide is Thymidylate kinase (Cupriavidus necator (strain ATCC 17699 / DSM 428 / KCTC 22496 / NCIMB 10442 / H16 / Stanier 337) (Ralstonia eutropha)).